Here is a 418-residue protein sequence, read N- to C-terminus: Gamma-glutamyl phosphate reductase (418 aa).

Belongs to the gamma-glutamyl phosphate reductase family.

The protein localises to the cytoplasm. It catalyses the reaction L-glutamate 5-semialdehyde + phosphate + NADP(+) = L-glutamyl 5-phosphate + NADPH + H(+). The protein operates within amino-acid biosynthesis; L-proline biosynthesis; L-glutamate 5-semialdehyde from L-glutamate: step 2/2. In terms of biological role, catalyzes the NADPH-dependent reduction of L-glutamate 5-phosphate into L-glutamate 5-semialdehyde and phosphate. The product spontaneously undergoes cyclization to form 1-pyrroline-5-carboxylate. The chain is Gamma-glutamyl phosphate reductase from Colwellia psychrerythraea (strain 34H / ATCC BAA-681) (Vibrio psychroerythus).